Reading from the N-terminus, the 428-residue chain is Histidine--tRNA ligase (428 aa).

The protein belongs to the class-II aminoacyl-tRNA synthetase family. As to quaternary structure, homodimer.

It localises to the cytoplasm. The enzyme catalyses tRNA(His) + L-histidine + ATP = L-histidyl-tRNA(His) + AMP + diphosphate + H(+). The sequence is that of Histidine--tRNA ligase from Mesomycoplasma hyopneumoniae (strain 232) (Mycoplasma hyopneumoniae).